The sequence spans 492 residues: Glutamyl-tRNA(Gln) amidotransferase subunit A (492 aa).

Active-site charge relay system residues include Lys78 and Ser158. The Acyl-ester intermediate role is filled by Ser182.

Belongs to the amidase family. GatA subfamily. As to quaternary structure, heterotrimer of A, B and C subunits.

The enzyme catalyses L-glutamyl-tRNA(Gln) + L-glutamine + ATP + H2O = L-glutaminyl-tRNA(Gln) + L-glutamate + ADP + phosphate + H(+). Its function is as follows. Allows the formation of correctly charged Gln-tRNA(Gln) through the transamidation of misacylated Glu-tRNA(Gln) in organisms which lack glutaminyl-tRNA synthetase. The reaction takes place in the presence of glutamine and ATP through an activated gamma-phospho-Glu-tRNA(Gln). The protein is Glutamyl-tRNA(Gln) amidotransferase subunit A of Orientia tsutsugamushi (strain Ikeda) (Rickettsia tsutsugamushi).